We begin with the raw amino-acid sequence, 258 residues long: Alpha-fibrinogenase (258 aa).

The N-terminal stretch at 1 to 18 (MVLIRVLANLVMLHLSYG) is a signal peptide. A propeptide spanning residues 19-24 (EKSSEL) is cleaved from the precursor. The 225-residue stretch at 25 to 249 (VIGGRPCNIN…YNDWIQSIIA (225 aa)) folds into the Peptidase S1 domain. 6 disulfide bridges follow: cysteine 31-cysteine 163, cysteine 50-cysteine 66, cysteine 98-cysteine 256, cysteine 142-cysteine 210, cysteine 174-cysteine 189, and cysteine 200-cysteine 225. An N-linked (GlcNAc...) asparagine glycan is attached at asparagine 44. The Charge relay system role is filled by histidine 65. N-linked (GlcNAc...) asparagine glycans are attached at residues asparagine 79 and asparagine 101. Residue aspartate 110 is the Charge relay system of the active site. The active-site Charge relay system is serine 204.

Belongs to the peptidase S1 family. Snake venom subfamily. In terms of assembly, monomer. Glycosylated. Contains 8.5% of hexoses, 5.8% of hexosamines and 0.8% of sialic acids. Expressed by the venom gland.

The protein localises to the secreted. With respect to regulation, inhibited by diisopropylfluorophosphate (DFP) and PMSF, and partially by soybean trypsin inhibitor, but not by EDTA. In terms of biological role, degrades alpha chain of fibrinogen (FGA), and has strong caseinolytic activity. Cleaves oxidized insulin B-chain at '40-Tyr-|-Leu-41', '48-Phe-|-Phe-49' and '49-Phe-|-Tyr-50', and glucagon at the bonds '62-Tyr-|-Ser-63', 66-Leu-|-Asp-67' and '78-Leu-|-Met-79' bonds. This Macrovipera lebetinus (Levantine viper) protein is Alpha-fibrinogenase.